The primary structure comprises 372 residues: 1,3,6,8-tetrahydroxynaphthalene synthase (372 aa).

Residue C138 is part of the active site.

Belongs to the thiolase-like superfamily. Chalcone/stilbene synthases family. In terms of assembly, homodimer.

The enzyme catalyses 5 malonyl-CoA + 5 H(+) = naphthalene-1,3,6,8-tetrol + 5 CO2 + 5 CoA + H2O. It functions in the pathway pigment biosynthesis; melanin biosynthesis. In terms of biological role, involved in the biosynthesis of melanin but also various secondary metabolites containing a naphthoquinone ring. Catalyzes the iterative condensation of five CoA-linked malonyl units to form a pentaketide intermediate. THNS subsequently catalyzes the dual intramolecular Claisen and aldol condensations of this linear intermediate to produce the fused ring of 1,3,6,8-tetrahydroxynaphthalene (THN). In Streptomyces griseus, this protein is 1,3,6,8-tetrahydroxynaphthalene synthase.